A 619-amino-acid polypeptide reads, in one-letter code: Teichoic acid poly(ribitol-phosphate) polymerase (619 aa).

It belongs to the CDP-glycerol glycerophosphotransferase family.

It localises to the cell membrane. The enzyme catalyses 4-O-[1-D-ribitylphospho-(2R)-1-glycerylphospho]-N-acetyl-beta-D-mannosaminyl-(1-&gt;4)-N-acetyl-alpha-D-glucosaminyl di-trans,octa-cis-undecaprenyl diphosphate + n CDP-L-ribitol = 4-O-[(D-ribitylphospho)(n)-D-ribitylphospho-(2R)-glycerylphospho]-N-acetyl-beta-D-mannosaminyl-(1-&gt;4)-N-acetyl-alpha-D-glucosaminyl di-trans,octa-cis-undecaprenyl diphosphate + n CMP + n H(+). The protein operates within cell wall biogenesis; poly(ribitol phosphate) teichoic acid biosynthesis. Responsible for the polymerization of the main chain of the major teichoic acid by sequential transfer of ribitol phosphate units from CDP-ribitol to the glycerol phosphate attached to the disaccharide linkage unit. Synthesizes polymers of up to 40 ribitol phosphate units in length. The sequence is that of Teichoic acid poly(ribitol-phosphate) polymerase (tarL) from Bacillus spizizenii (strain ATCC 23059 / NRRL B-14472 / W23) (Bacillus subtilis subsp. spizizenii).